A 211-amino-acid chain; its full sequence is MRDIVIIGHKAKTSGDFSLNDLPGSAGRMDILCRCVSSALFLSFGMRRDVNVHLLLLGEPEPGKIIRFEGLHLRYLNPDERSSGSLIQKALQKTVTEKDIRSTPGVWVRNGDLNTLLASFEGRTLFYLREDGEDIRGLDREIRDPVFILGDHMGVTEEEEKQLLEAGAKIISVGPISLHSNHCITLLHNELDRAEAERGEIPGGEKLRAGE.

S-adenosyl-L-methionine contacts are provided by L128, G150, and C183.

Belongs to the methyltransferase superfamily. TrmY family. As to quaternary structure, homodimer.

The protein localises to the cytoplasm. The enzyme catalyses pseudouridine(54) in tRNA + S-adenosyl-L-methionine = N(1)-methylpseudouridine(54) in tRNA + S-adenosyl-L-homocysteine + H(+). Specifically catalyzes the N1-methylation of pseudouridine at position 54 (Psi54) in tRNAs. The chain is tRNA (pseudouridine(54)-N(1))-methyltransferase from Methanosarcina acetivorans (strain ATCC 35395 / DSM 2834 / JCM 12185 / C2A).